A 154-amino-acid polypeptide reads, in one-letter code: uncharacterized protein (154 aa).

Positions Arg7 to Asp143 constitute an HTH marR-type domain. The segment at residues Ala57–Lys80 is a DNA-binding region (H-T-H motif).

This is an uncharacterized protein from Bacillus subtilis (strain 168).